A 159-amino-acid chain; its full sequence is Ribonuclease H (159 aa).

Positions 2 to 144 (SQDPVIIHTD…ADELATRGLQ (143 aa)) constitute an RNase H type-1 domain. Asp-11, Glu-50, Asp-72, and Asp-136 together coordinate Mg(2+).

The protein belongs to the RNase H family. As to quaternary structure, monomer. The cofactor is Mg(2+).

The protein resides in the cytoplasm. The catalysed reaction is Endonucleolytic cleavage to 5'-phosphomonoester.. Endonuclease that specifically degrades the RNA of RNA-DNA hybrids. This Mycolicibacterium smegmatis (strain ATCC 700084 / mc(2)155) (Mycobacterium smegmatis) protein is Ribonuclease H.